We begin with the raw amino-acid sequence, 1549 residues long: Ferredoxin-dependent glutamate synthase (1549 aa).

Residue C37 is the For GATase activity of the active site. Residues 37 to 435 (CGVGFIAHLD…PGEMIVLDLQ (399 aa)) form the Glutamine amidotransferase type-2 domain. An FMN-binding site is contributed by 1116-1173 (LHEVHCLLVENNLREKVILRVDGGLRTGQDVVMAALLGADEYGFGTIAMIAGGCIMAR). [3Fe-4S] cluster-binding residues include C1169, C1175, and C1180.

Belongs to the glutamate synthase family. Monomer. Requires [3Fe-4S] cluster as cofactor. FAD is required as a cofactor. FMN serves as cofactor.

It is found in the plastid. It localises to the chloroplast stroma. It carries out the reaction 2 oxidized [2Fe-2S]-[ferredoxin] + 2 L-glutamate = L-glutamine + 2 reduced [2Fe-2S]-[ferredoxin] + 2-oxoglutarate + 2 H(+). Its pathway is amino-acid biosynthesis; L-glutamate biosynthesis via GLT pathway; L-glutamate from 2-oxoglutarate and L-glutamine (ferredoxin route): step 1/1. The protein operates within energy metabolism; nitrogen metabolism. This is Ferredoxin-dependent glutamate synthase (gltB) from Cyanidium caldarium (Red alga).